An 84-amino-acid chain; its full sequence is U8-theraphotoxin-Hhn1b (84 aa).

A signal peptide spans 1-21 (MKVVLIVCLVWVMAMMELVSC). Intrachain disulfides connect Cys23–Cys35, Cys29–Cys44, Cys34–Cys67, and Cys54–Cys75.

It belongs to the AVIT (prokineticin) family. In terms of tissue distribution, expressed by the venom gland.

The protein localises to the secreted. This chain is U8-theraphotoxin-Hhn1b, found in Cyriopagopus hainanus (Chinese bird spider).